Reading from the N-terminus, the 168-residue chain is MVELESQEAVTVASTADIAVDVSLRLLAAATSLAAAVVVAANHQQRWGIRVDFTLFQVWIGFVAVNLVCTVYAAATAAAAARKAMGRWWLHHADAVVVNLEAAATAGAGAIGSIAMWGNEASGWYAVCRLYRRYCNAGAAALALSLAAVLLLGVACARSRYPKMPPTT.

Residues 1-17 are Cytoplasmic-facing; the sequence is MVELESQEAVTVASTAD. The chain crosses the membrane as a helical span at residues 18 to 38; the sequence is IAVDVSLRLLAAATSLAAAVV. The Extracellular segment spans residues 39–54; the sequence is VAANHQQRWGIRVDFT. The helical transmembrane segment at 55 to 75 threads the bilayer; sequence LFQVWIGFVAVNLVCTVYAAA. The Cytoplasmic segment spans residues 76–95; it reads TAAAAARKAMGRWWLHHADA. The helical transmembrane segment at 96–116 threads the bilayer; the sequence is VVVNLEAAATAGAGAIGSIAM. Residues 117-136 lie on the Extracellular side of the membrane; it reads WGNEASGWYAVCRLYRRYCN. The chain crosses the membrane as a helical span at residues 137–157; that stretch reads AGAAALALSLAAVLLLGVACA. Over 158-168 the chain is Cytoplasmic; the sequence is RSRYPKMPPTT.

This sequence belongs to the Casparian strip membrane proteins (CASP) family. As to quaternary structure, homodimer and heterodimers.

Its subcellular location is the cell membrane. The polypeptide is CASP-like protein UU-1 (Oryza sativa subsp. japonica (Rice)).